A 318-amino-acid chain; its full sequence is CRISPR-associated endonuclease Cas1 1 (318 aa).

3 residues coordinate Mn(2+): glutamate 160, histidine 225, and glutamate 240.

The protein belongs to the CRISPR-associated endonuclease Cas1 family. Homodimer, forms a heterotetramer with a Cas2 homodimer. Mg(2+) is required as a cofactor. The cofactor is Mn(2+).

Its function is as follows. CRISPR (clustered regularly interspaced short palindromic repeat), is an adaptive immune system that provides protection against mobile genetic elements (viruses, transposable elements and conjugative plasmids). CRISPR clusters contain spacers, sequences complementary to antecedent mobile elements, and target invading nucleic acids. CRISPR clusters are transcribed and processed into CRISPR RNA (crRNA). Acts as a dsDNA endonuclease. Involved in the integration of spacer DNA into the CRISPR cassette. This chain is CRISPR-associated endonuclease Cas1 1, found in Thermodesulfovibrio yellowstonii (strain ATCC 51303 / DSM 11347 / YP87).